Reading from the N-terminus, the 556-residue chain is ATP synthase subunit beta-1, mitochondrial (556 aa).

The span at 1–20 (MASRRVLSSLLRSSSGRSAA) shows a compositional bias: low complexity. Residues 1-37 (MASRRVLSSLLRSSSGRSAAKLGNRNPRLPSPSPARH) form a disordered region. Residues 1–51 (MASRRVLSSLLRSSSGRSAAKLGNRNPRLPSPSPARHAAPCSYLLGRVAEY) constitute a mitochondrion transit peptide. At Ser59 the chain carries Phosphoserine. 231–238 (GGAGVGKT) serves as a coordination point for ATP.

Belongs to the ATPase alpha/beta chains family. As to quaternary structure, F-type ATPases have 2 components, CF(1) - the catalytic core - and CF(0) - the membrane proton channel. CF(1) has five subunits: alpha(3), beta(3), gamma(1), delta(1), epsilon(1). CF(0) has three main subunits: a, b and c.

The protein localises to the mitochondrion. It localises to the mitochondrion inner membrane. The catalysed reaction is ATP + H2O + 4 H(+)(in) = ADP + phosphate + 5 H(+)(out). Mitochondrial membrane ATP synthase (F(1)F(0) ATP synthase or Complex V) produces ATP from ADP in the presence of a proton gradient across the membrane which is generated by electron transport complexes of the respiratory chain. F-type ATPases consist of two structural domains, F(1) - containing the extramembraneous catalytic core, and F(0) - containing the membrane proton channel, linked together by a central stalk and a peripheral stalk. During catalysis, ATP synthesis in the catalytic domain of F(1) is coupled via a rotary mechanism of the central stalk subunits to proton translocation. Subunits alpha and beta form the catalytic core in F(1). Rotation of the central stalk against the surrounding alpha(3)beta(3) subunits leads to hydrolysis of ATP in three separate catalytic sites on the beta subunits. The sequence is that of ATP synthase subunit beta-1, mitochondrial from Arabidopsis thaliana (Mouse-ear cress).